The chain runs to 302 residues: Sulfate adenylyltransferase subunit 2 (302 aa).

Belongs to the PAPS reductase family. CysD subfamily. In terms of assembly, heterodimer composed of CysD, the smaller subunit, and CysN.

It carries out the reaction sulfate + ATP + H(+) = adenosine 5'-phosphosulfate + diphosphate. It functions in the pathway sulfur metabolism; hydrogen sulfide biosynthesis; sulfite from sulfate: step 1/3. Its function is as follows. With CysN forms the ATP sulfurylase (ATPS) that catalyzes the adenylation of sulfate producing adenosine 5'-phosphosulfate (APS) and diphosphate, the first enzymatic step in sulfur assimilation pathway. APS synthesis involves the formation of a high-energy phosphoric-sulfuric acid anhydride bond driven by GTP hydrolysis by CysN coupled to ATP hydrolysis by CysD. This chain is Sulfate adenylyltransferase subunit 2, found in Escherichia coli O7:K1 (strain IAI39 / ExPEC).